Consider the following 226-residue polypeptide: ATP synthase subunit a (226 aa).

A run of 6 helical transmembrane segments spans residues 18–38 (FITG…SLGA), 79–99 (LAGT…IPGF), 105–125 (SWSF…FEGI), 134–154 (FAHF…IEII), 179–199 (LIML…VLFF), and 201–221 (GILQ…GAVL).

Belongs to the ATPase A chain family. In terms of assembly, F-type ATPases have 2 components, CF(1) - the catalytic core - and CF(0) - the membrane proton channel. CF(1) has five subunits: alpha(3), beta(3), gamma(1), delta(1), epsilon(1). CF(0) has three main subunits: a(1), b(2) and c(9-12). The alpha and beta chains form an alternating ring which encloses part of the gamma chain. CF(1) is attached to CF(0) by a central stalk formed by the gamma and epsilon chains, while a peripheral stalk is formed by the delta and b chains.

Its subcellular location is the cell inner membrane. Key component of the proton channel; it plays a direct role in the translocation of protons across the membrane. This chain is ATP synthase subunit a, found in Helicobacter pylori (strain J99 / ATCC 700824) (Campylobacter pylori J99).